The primary structure comprises 271 residues: Serine O-acetyltransferase (271 aa).

Cys112 (acyl-thioester intermediate) is an active-site residue. His204 (proton acceptor) is an active-site residue. The active site involves Glu206.

This sequence belongs to the MetA family.

The catalysed reaction is L-serine + acetyl-CoA = O-acetyl-L-serine + CoA. Its pathway is amino-acid biosynthesis; L-cysteine biosynthesis; L-cysteine from L-serine: step 1/2. Catalyzes the formation of O-acetylserine (OAS) from L-serine and acetyl-CoA. To a lesser extent, is also able to use succinyl-CoA and propionyl-CoA as acyl donors, but not butyryl-CoA. Does not acylate D-serine and L-homoserine. The protein is Serine O-acetyltransferase of Lacticaseibacillus casei (Lactobacillus casei).